Here is a 588-residue protein sequence, read N- to C-terminus: MFS siderochrome iron transporter 1 (588 aa).

13 helical membrane-spanning segments follow: residues Gln60–Val80, Leu104–Ala124, Pro133–Cys153, Ala161–Ile181, Ala191–Leu211, Tyr225–Trp245, Ile278–Tyr298, Ser307–Tyr327, Leu348–Phe368, Tyr385–Val405, Trp413–Phe433, Ile440–Thr460, and Tyr473–Val495. N-linked (GlcNAc...) asparagine glycosylation is present at Asn519. Residues Lys552–Trp572 traverse the membrane as a helical segment.

Belongs to the major facilitator superfamily.

The protein localises to the membrane. In terms of biological role, major facilitator transporter involved in siderophore transport. The polypeptide is MFS siderochrome iron transporter 1 (Ajellomyces capsulatus (Darling's disease fungus)).